Consider the following 286-residue polypeptide: MSGKEESSNYAATAEEEAVNQGFVLPEGEIMPNTVFVGGIDITMDEIEIRDFFTRFGNVKEVKIITDRTGVSKGYGFISFSDEVDVQKIVKSQISFHGKKLKLGPAIRKICTYVQPRPVVLSHPTPFHHAWNNQNADSYIQHSPIVSPITQYVQACPYPSSPPMAIQQIPVGCQQPGYFQVSPQWPADQRSYMFPTPAFTFNYHCCDMDPNGGEPIPREYPIDQTVSASGANPQKRYVEMSTQTIVSCLFDPANKFHSFVSQEDYLKDNRVHHLRRRESVIKRVSK.

The 82-residue stretch at 33 to 114 (NTVFVGGIDI…PAIRKICTYV (82 aa)) folds into the RRM domain. Residues 155 to 180 (ACPYPSSPPMAIQQIPVGCQQPGYFQ) enclose the DAZ domain.

This sequence belongs to the RRM DAZ family. As to quaternary structure, interacts with the C-terminus of pabp1 and with epabp. Prior to oocyte maturation, found in a complex with epabp and pum2 proteins and spdy1 mRNA; pum2 dissociates from the complex during maturation. Germ-line specific. Oocyte mRNA expression is first restricted to the granulo-fibrillar material (GFM) of the mitochondrial cloud and then to the oocyte germ plasm at the vegetal cortex. Remains an mRNA component of the germ plasm until the neurula stage. In 2-8 cell embryos, expressed in the germ plasm matrix between germinal granules and mitochondria. Expressed in primordial germ cells (PGCs) later in embryogenesis. In addition to the ovaries of adult females, expressed in the testis of adult and juvenile males in spermatogonia and spermatocytes. The protein is restricted to the embryonic germ plasm and primordial germ cells.

It localises to the cytoplasm. Functionally, RNA-binding protein that is required for primordial germ cell (PGC) differentiation and indirectly necessary for the migration of PGCs through the endoderm. May promote meiotic cell division during spermatogenesis. Shows a preference for G- and U-rich RNAs and probably binds the 3'-UTR of target mRNAs. Stimulates the initiation of translation of mRNAs through the recruitment of poly(A)-binding proteins (PABPs). This chain is Deleted in azoospermia-like-A (dazl-a), found in Xenopus laevis (African clawed frog).